The primary structure comprises 232 residues: 2,3,4,5-tetrahydropyridine-2,6-dicarboxylate N-acetyltransferase (232 aa).

Belongs to the transferase hexapeptide repeat family. DapH subfamily.

It catalyses the reaction (S)-2,3,4,5-tetrahydrodipicolinate + acetyl-CoA + H2O = L-2-acetamido-6-oxoheptanedioate + CoA. It functions in the pathway amino-acid biosynthesis; L-lysine biosynthesis via DAP pathway; LL-2,6-diaminopimelate from (S)-tetrahydrodipicolinate (acetylase route): step 1/3. Catalyzes the transfer of an acetyl group from acetyl-CoA to tetrahydrodipicolinate. This is 2,3,4,5-tetrahydropyridine-2,6-dicarboxylate N-acetyltransferase from Streptococcus pneumoniae (strain Taiwan19F-14).